A 315-amino-acid polypeptide reads, in one-letter code: Porphobilinogen deaminase (315 aa).

An S-(dipyrrolylmethanemethyl)cysteine modification is found at cysteine 242.

It belongs to the HMBS family. In terms of assembly, monomer. Dipyrromethane is required as a cofactor.

It carries out the reaction 4 porphobilinogen + H2O = hydroxymethylbilane + 4 NH4(+). It participates in porphyrin-containing compound metabolism; protoporphyrin-IX biosynthesis; coproporphyrinogen-III from 5-aminolevulinate: step 2/4. Functionally, tetrapolymerization of the monopyrrole PBG into the hydroxymethylbilane pre-uroporphyrinogen in several discrete steps. The protein is Porphobilinogen deaminase of Syntrophotalea carbinolica (strain DSM 2380 / NBRC 103641 / GraBd1) (Pelobacter carbinolicus).